The chain runs to 78 residues: MALFEDIQAVIAEQLNVDAAQVTPEAEFVKDLGADSLDVVELIMALEEKFNIEIPDEQAEKIVNVGDVVKYIEDNKLA.

The region spanning M1–K76 is the Carrier domain. S36 carries the post-translational modification O-(pantetheine 4'-phosphoryl)serine.

The protein belongs to the acyl carrier protein (ACP) family. Post-translationally, 4'-phosphopantetheine is transferred from CoA to a specific serine of apo-ACP by AcpS. This modification is essential for activity because fatty acids are bound in thioester linkage to the sulfhydryl of the prosthetic group.

It localises to the cytoplasm. It functions in the pathway lipid metabolism; fatty acid biosynthesis. In terms of biological role, carrier of the growing fatty acid chain in fatty acid biosynthesis. The protein is Acyl carrier protein of Helicobacter pylori (strain J99 / ATCC 700824) (Campylobacter pylori J99).